Reading from the N-terminus, the 154-residue chain is Putative pre-16S rRNA nuclease (154 aa).

This sequence belongs to the YqgF nuclease family.

Its subcellular location is the cytoplasm. Functionally, could be a nuclease involved in processing of the 5'-end of pre-16S rRNA. The sequence is that of Putative pre-16S rRNA nuclease from Rickettsia rickettsii (strain Iowa).